The following is a 64-amino-acid chain: Large ribosomal subunit protein bL33 (64 aa).

The span at 16-25 (EARTSSEPRR) shows a compositional bias: basic and acidic residues. Residues 16-41 (EARTSSEPRRSNGVSRYTTEKNKRNT) form a disordered region.

This sequence belongs to the bacterial ribosomal protein bL33 family.

This chain is Large ribosomal subunit protein bL33, found in Prochlorococcus marinus subsp. pastoris (strain CCMP1986 / NIES-2087 / MED4).